The chain runs to 212 residues: Uridine kinase (212 aa).

Position 13 to 20 (13 to 20 (GGSGSGKT)) interacts with ATP.

The protein belongs to the uridine kinase family.

Its subcellular location is the cytoplasm. The enzyme catalyses uridine + ATP = UMP + ADP + H(+). The catalysed reaction is cytidine + ATP = CMP + ADP + H(+). It functions in the pathway pyrimidine metabolism; CTP biosynthesis via salvage pathway; CTP from cytidine: step 1/3. The protein operates within pyrimidine metabolism; UMP biosynthesis via salvage pathway; UMP from uridine: step 1/1. The protein is Uridine kinase of Bacillus mycoides (strain KBAB4) (Bacillus weihenstephanensis).